The primary structure comprises 599 residues: Sulfite reductase [NADPH] flavoprotein alpha-component (599 aa).

Residues 64-202 form the Flavodoxin-like domain; sequence ITIISASQTG…AASEWRARVV (139 aa). FMN contacts are provided by residues 70–75, 117–120, and 153–162; these read SQTGNA, STQG, and LGDSSYEFFC. The 215-residue stretch at 234-448 folds into the FAD-binding FR-type domain; sequence DAPLAASLSV…IEHNDNFRLP (215 aa). Residues Thr-322, Ala-356, 386–389, 404–406, Tyr-410, and 419–422 each bind FAD; these read RLYS, TVG, and GGAS. NADP(+) is bound by residues 519–520, 525–529, and Asp-561; these read SR and KIYVQ. Tyr-599 contacts FAD.

The protein belongs to the NADPH-dependent sulphite reductase flavoprotein subunit CysJ family. It in the N-terminal section; belongs to the flavodoxin family. This sequence in the C-terminal section; belongs to the flavoprotein pyridine nucleotide cytochrome reductase family. Alpha(8)-beta(8). The alpha component is a flavoprotein, the beta component is a hemoprotein. FAD serves as cofactor. Requires FMN as cofactor.

It carries out the reaction hydrogen sulfide + 3 NADP(+) + 3 H2O = sulfite + 3 NADPH + 4 H(+). It functions in the pathway sulfur metabolism; hydrogen sulfide biosynthesis; hydrogen sulfide from sulfite (NADPH route): step 1/1. Its function is as follows. Component of the sulfite reductase complex that catalyzes the 6-electron reduction of sulfite to sulfide. This is one of several activities required for the biosynthesis of L-cysteine from sulfate. The flavoprotein component catalyzes the electron flow from NADPH -&gt; FAD -&gt; FMN to the hemoprotein component. The polypeptide is Sulfite reductase [NADPH] flavoprotein alpha-component (Escherichia coli O6:H1 (strain CFT073 / ATCC 700928 / UPEC)).